The primary structure comprises 655 residues: Sphingomyelin phosphodiesterase 3 (655 aa).

The Cytoplasmic portion of the chain corresponds to 1 to 10; it reads MVLYTTPFPN. The segment at residues 11-31 is an intramembrane region (helical); the sequence is SCLSALHAVSWALIFPCYWLV. The Cytoplasmic segment spans residues 32–64; that stretch reads DRLLASFIPTTYEKRQRADDPCCLQLFCTVLFT. 3 S-palmitoyl cysteine lipidation sites follow: Cys53, Cys54, and Cys59. Positions 65-85 form an intramembrane region, helical; sequence PVYLALLVAALPFAFLGFIFW. Topologically, residues 86 to 655 are cytoplasmic; that stretch reads SPLQSARRPY…LMVSAGEEEA (570 aa). The residue at position 178 (Ser178) is a Phosphoserine. The disordered stretch occupies residues 209–318; the sequence is VEYKGDGGRH…SGGSGEPGAN (110 aa). 2 stretches are compositionally biased toward basic and acidic residues: residues 211-221 and 246-255; these read YKGDGGRHPSD and GGEEGGRPQE. Ser289 carries the phosphoserine modification. Glu362 contributes to the Mg(2+) binding site. Residues Cys395 and Cys396 are each lipidated (S-palmitoyl cysteine). His639 functions as the Proton acceptor in the catalytic mechanism.

The protein belongs to the neutral sphingomyelinase family. Mg(2+) is required as a cofactor. In terms of processing, palmitoylated, palmitoylation-deficient proteins are targeted for lysosomal degradation. In terms of tissue distribution, predominantly expressed in brain (at protein level).

It localises to the golgi apparatus membrane. It is found in the cell membrane. It catalyses the reaction a sphingomyelin + H2O = phosphocholine + an N-acylsphing-4-enine + H(+). The enzyme catalyses N-(15Z-tetracosenoyl)sphing-4-enine-1-phosphocholine + H2O = N-(15Z-tetracosenoyl)-sphing-4-enine + phosphocholine + H(+). It carries out the reaction N-(tetracosanoyl)-sphing-4-enine-1-phosphocholine + H2O = N-tetracosanoyl-sphing-4-enine + phosphocholine + H(+). The catalysed reaction is N-(hexadecanoyl)-sphing-4-enine-1-phosphocholine + H2O = N-hexadecanoylsphing-4-enine + phosphocholine + H(+). It catalyses the reaction an N-(acyl)-sphingosylphosphocholine + H2O = an N-acyl-sphingoid base + phosphocholine + H(+). The enzyme catalyses 1-hexadecanoyl-sn-glycero-3-phosphocholine + H2O = 1-hexadecanoyl-sn-glycerol + phosphocholine + H(+). It carries out the reaction 1-O-octadecyl-sn-glycero-3-phosphocholine + H2O = 1-O-octadecyl-sn-glycerol + phosphocholine + H(+). The catalysed reaction is a sphingosylphosphocholine + H2O = a sphingoid base + phosphocholine + H(+). It functions in the pathway lipid metabolism; sphingolipid metabolism. Inhibited by nSMase inhibitor GW4869. Binding of anionic phospholipids (APLs) such as phosphatidylserine (PS) and phosphatidic acid (PA) increases enzymatic activity. Its function is as follows. Catalyzes the hydrolysis of sphingomyelin to form ceramide and phosphocholine. Ceramide mediates numerous cellular functions, such as apoptosis and growth arrest, and is capable of regulating these 2 cellular events independently. Also hydrolyzes sphingosylphosphocholine. Regulates the cell cycle by acting as a growth suppressor in confluent cells. Probably acts as a regulator of postnatal development and participates in bone and dentin mineralization. Binds to anionic phospholipids (APLs) such as phosphatidylserine (PS) and phosphatidic acid (PA) that modulate enzymatic activity and subcellular location. May be involved in IL-1-beta-induced JNK activation in hepatocytes. May act as a mediator in transcriptional regulation of NOS2/iNOS via the NF-kappa-B activation under inflammatory conditions. The sequence is that of Sphingomyelin phosphodiesterase 3 from Mus musculus (Mouse).